The following is a 431-amino-acid chain: RbAp48-related WD40 repeat-containing protein prw1 (431 aa).

WD repeat units follow at residues Ser-127–Asp-159, Lys-182–Asp-213, Ser-232–Asp-263, Ala-279–Asp-310, Gly-323–Asp-354, and Gly-380–Thr-411.

Belongs to the WD repeat HIR1 family. Heterotetramer of alp13, clr6, prw1 and pst2.

It is found in the nucleus. Its function is as follows. Has a role in chromatin assembly and chromosome segregation. Involved in the deacetylation of histones. The chain is RbAp48-related WD40 repeat-containing protein prw1 (prw1) from Schizosaccharomyces pombe (strain 972 / ATCC 24843) (Fission yeast).